Consider the following 499-residue polypeptide: Probable alkaline/neutral invertase F (499 aa).

S11 bears the Phosphoserine mark. T20 is subject to Phosphothreonine. S497 is subject to Phosphoserine.

It belongs to the glycosyl hydrolase 100 family.

It carries out the reaction Hydrolysis of terminal non-reducing beta-D-fructofuranoside residues in beta-D-fructofuranosides.. In terms of biological role, invertase that cleaves sucrose into glucose and fructose. This Arabidopsis thaliana (Mouse-ear cress) protein is Probable alkaline/neutral invertase F.